A 607-amino-acid chain; its full sequence is MASITASHHFVSRSQTSLDTKSTLSQIGLRNHTLTHNGLRAVNKLDGLQSRTNTKVTPKMASRTETKRPGCSATIVCGKGMNLIFVGTEVGPWSKTGGLGDVLGGLPPALAARGHRVMTISPRYDQYKDAWDTSVAVEVKVGDSIEIVRFFHCYKRGVDRVFVDHPMFLEKVWGKTGSKIYGPKAGLDYLDNELRFSLLCQAALEAPKVLNLNSSNYFSGPYGEDVLFIANDWHTALIPCYLKSMYQSRGIYLNAKVAFCIHNIAYQGRFSFSDFPLLNLPDEFRGSFDFIDGYEKPVKGRKINWMKAGILESHRVVTVSPYYAQELVSAVDKGVELDSVLRKTCITGIVNGMDTQEWNPATDKYTDVKYDITTVMDAKPLLKEALQAAVGLPVDKKIPLIGFIGRLEEQKGSDILVAAIHKFIGLDVQIVVLGTGKKEFEQEIEQLEVLYPNKAKGVAKFNVPLAHMITAGADFMLVPSRFEPCGLIQLHAMRYGTVPICASTGGLVDTVKEGYTGFHMGAFNVECDVVDPADVLKIVTTVARALAVYGTLAFAEMIKNCMSEELSWKEPAKKWETLLLGLGASGSEPGVEGEEIAPLAKENVATP.

The transit peptide at 1-77 (MASITASHHF…RPGCSATIVC (77 aa)) directs the protein to the chloroplast. Lys-95 lines the ADP-alpha-D-glucose pocket. The tract at residues 585 to 607 (SGSEPGVEGEEIAPLAKENVATP) is disordered.

It belongs to the glycosyltransferase 1 family. Bacterial/plant glycogen synthase subfamily.

It is found in the plastid. Its subcellular location is the chloroplast. The protein localises to the amyloplast. It carries out the reaction an NDP-alpha-D-glucose + [(1-&gt;4)-alpha-D-glucosyl](n) = [(1-&gt;4)-alpha-D-glucosyl](n+1) + a ribonucleoside 5'-diphosphate + H(+). The protein operates within glycan biosynthesis; starch biosynthesis. The polypeptide is Granule-bound starch synthase 1, chloroplastic/amyloplastic (WAXY) (Solanum tuberosum (Potato)).